The sequence spans 420 residues: Subtilisin (420 aa).

The first 31 residues, 1-31 (MKRSGKIFTTAMLAVTLMMPAMGVSANEGNA), serve as a signal peptide directing secretion. Positions 32–111 (AAEGNEKFRV…DKPEALYNAM (80 aa)) are excised as a propeptide. Gln-115 is a Ca(2+) binding site. Residues 118–420 (PWGIKAIYNN…ASGFGFATVQ (303 aa)) enclose the Peptidase S8 domain. The Charge relay system role is filled by Asp-145. Asp-154 lines the Ca(2+) pocket. Active-site charge relay system residues include His-182 and Ser-360.

This sequence belongs to the peptidase S8 family. It depends on Ca(2+) as a cofactor.

It is found in the secreted. The catalysed reaction is Hydrolysis of proteins with broad specificity for peptide bonds, and a preference for a large uncharged residue in P1. Hydrolyzes peptide amides.. Functionally, subtilisin is an extracellular alkaline serine protease, it catalyzes the hydrolysis of proteins and peptide amides. The polypeptide is Subtilisin (sub1) (Bacillus sp. (strain TA39)).